Consider the following 230-residue polypeptide: Cytidylate kinase (230 aa).

12 to 20 (GPSGAGKGT) provides a ligand contact to ATP.

This sequence belongs to the cytidylate kinase family. Type 1 subfamily.

The protein localises to the cytoplasm. The catalysed reaction is CMP + ATP = CDP + ADP. It carries out the reaction dCMP + ATP = dCDP + ADP. This Yersinia enterocolitica serotype O:8 / biotype 1B (strain NCTC 13174 / 8081) protein is Cytidylate kinase.